The following is a 342-amino-acid chain: Succinylglutamate desuccinylase (342 aa).

Residues His63, Glu66, and His155 each contribute to the Zn(2+) site. The active site involves Glu219.

The protein belongs to the AspA/AstE family. Succinylglutamate desuccinylase subfamily. Requires Zn(2+) as cofactor.

It catalyses the reaction N-succinyl-L-glutamate + H2O = L-glutamate + succinate. It functions in the pathway amino-acid degradation; L-arginine degradation via AST pathway; L-glutamate and succinate from L-arginine: step 5/5. Functionally, transforms N(2)-succinylglutamate into succinate and glutamate. The protein is Succinylglutamate desuccinylase of Vibrio cholerae serotype O1 (strain ATCC 39541 / Classical Ogawa 395 / O395).